Reading from the N-terminus, the 125-residue chain is Large ribosomal subunit protein bL12 (125 aa).

It belongs to the bacterial ribosomal protein bL12 family. In terms of assembly, homodimer. Part of the ribosomal stalk of the 50S ribosomal subunit. Forms a multimeric L10(L12)X complex, where L10 forms an elongated spine to which 2 to 4 L12 dimers bind in a sequential fashion. Binds GTP-bound translation factors.

Functionally, forms part of the ribosomal stalk which helps the ribosome interact with GTP-bound translation factors. Is thus essential for accurate translation. The protein is Large ribosomal subunit protein bL12 of Bradyrhizobium sp. (strain ORS 278).